Reading from the N-terminus, the 552-residue chain is Scavenger receptor class B member 1 (552 aa).

Topologically, residues 1 to 11 (MGCSAKARWAA) are cytoplasmic. Residues 12–32 (GALGVAGLLCAVLGAVMIVMV) traverse the membrane as a helical segment. At 33–443 (PSLIKQQVLK…LVLMPKVMHY (411 aa)) the chain is on the extracellular side. 9 N-linked (GlcNAc...) asparagine glycosylation sites follow: asparagine 102, asparagine 108, asparagine 173, asparagine 212, asparagine 227, asparagine 255, asparagine 310, asparagine 330, and asparagine 383. The cysteines at positions 251 and 384 are disulfide-linked. Phosphoserine occurs at positions 393 and 458. A helical transmembrane segment spans residues 444 to 464 (AQYVLLALGCVLLLVPVICQI). Cysteine 462 carries the S-palmitoyl cysteine lipid modification. Over 465 to 552 (RSQVGAGQRA…GPSLGGGTGS (88 aa)) the chain is Cytoplasmic. A Phosphoserine modification is found at threonine 493.

This sequence belongs to the CD36 family. The C-terminal region binds to PDZK1. In terms of assembly, (Microbial infection) Interacts with hepatitis C virus E1:E2 glycoproteins. In terms of processing, N-glycosylated. The six cysteines of the extracellular domain are all involved in intramolecular disulfide bonds. Widely expressed.

The protein localises to the cell membrane. Its subcellular location is the membrane. It localises to the caveola. Receptor for different ligands such as phospholipids, cholesterol ester, lipoproteins, phosphatidylserine and apoptotic cells. Receptor for HDL, mediating selective uptake of cholesteryl ether and HDL-dependent cholesterol efflux. Also facilitates the flux of free and esterified cholesterol between the cell surface and apoB-containing lipoproteins and modified lipoproteins, although less efficiently than HDL. May be involved in the phagocytosis of apoptotic cells, via its phosphatidylserine binding activity. Its function is as follows. (Microbial infection) Acts as a receptor for hepatitis C virus in hepatocytes and appears to facilitate its cell entry. Binding between SCARB1 and the hepatitis C virus glycoprotein E2 is independent of the genotype of the viral isolate. In terms of biological role, (Microbial infection) Mediates uptake of M.fortuitum, E.coli and S.aureus. Functionally, (Microbial infection) Facilitates the entry of human coronavirus SARS-CoV-2 by acting as an entry cofactor through HDL binding. This Homo sapiens (Human) protein is Scavenger receptor class B member 1 (SCARB1).